Reading from the N-terminus, the 75-residue chain is Small ribosomal subunit protein bS18 (75 aa).

This sequence belongs to the bacterial ribosomal protein bS18 family. Part of the 30S ribosomal subunit. Forms a tight heterodimer with protein bS6.

Binds as a heterodimer with protein bS6 to the central domain of the 16S rRNA, where it helps stabilize the platform of the 30S subunit. The polypeptide is Small ribosomal subunit protein bS18 (Shewanella loihica (strain ATCC BAA-1088 / PV-4)).